Here is a 179-residue protein sequence, read N- to C-terminus: uncharacterized protein (179 aa).

Positions threonine 27–lysine 54 are disordered.

This is an uncharacterized protein from Escherichia coli (strain K12).